We begin with the raw amino-acid sequence, 262 residues long: Small ribosomal subunit protein eS1 (262 aa).

The protein belongs to the eukaryotic ribosomal protein eS1 family. As to quaternary structure, component of the small ribosomal subunit. Mature ribosomes consist of a small (40S) and a large (60S) subunit. The 40S subunit contains about 33 different proteins and 1 molecule of RNA (18S). The 60S subunit contains about 49 different proteins and 3 molecules of RNA (25S, 5.8S and 5S).

It is found in the cytoplasm. This is Small ribosomal subunit protein eS1 from Theileria parva (East coast fever infection agent).